Consider the following 268-residue polypeptide: Putative hydro-lyase ABSDF2257 (268 aa).

It belongs to the D-glutamate cyclase family.

The chain is Putative hydro-lyase ABSDF2257 from Acinetobacter baumannii (strain SDF).